The primary structure comprises 228 residues: Ureidoacrylate amidohydrolase RutB (228 aa).

Residue Asp23 is the Proton acceptor of the active site. The active site involves Lys132. Cys165 (nucleophile) is an active-site residue.

This sequence belongs to the isochorismatase family. RutB subfamily.

The catalysed reaction is (Z)-3-ureidoacrylate + H2O + H(+) = (Z)-3-aminoacrylate + NH4(+) + CO2. It carries out the reaction (Z)-3-ureidoacrylate + H2O = (Z)-3-aminoacrylate + carbamate + H(+). The enzyme catalyses (Z)-2-methylureidoacrylate + H2O + H(+) = (Z)-2-methylaminoacrylate + NH4(+) + CO2. Hydrolyzes ureidoacrylate to form aminoacrylate and carbamate. The carbamate hydrolyzes spontaneously, thereby releasing one of the nitrogen atoms of the pyrimidine ring as ammonia and one of its carbon atoms as CO2. This chain is Ureidoacrylate amidohydrolase RutB, found in Agrobacterium fabrum (strain C58 / ATCC 33970) (Agrobacterium tumefaciens (strain C58)).